The following is a 92-amino-acid chain: Small ribosomal subunit protein uS19 (92 aa).

The protein belongs to the universal ribosomal protein uS19 family.

Protein S19 forms a complex with S13 that binds strongly to the 16S ribosomal RNA. This Anoxybacillus flavithermus (strain DSM 21510 / WK1) protein is Small ribosomal subunit protein uS19.